The following is a 271-amino-acid chain: Aquaporin-1 (271 aa).

The Cytoplasmic segment spans residues 1 to 11 (MASEFKKKLFW). A helical transmembrane segment spans residues 12 to 29 (RAVVAEFLAMILFVFISI). At 30 to 48 (GSALGFNYPVRNNQTAGAA) the chain is on the extracellular side. Residue N42 is glycosylated (N-linked (GlcNAc...) asparagine). The helical transmembrane segment at 49 to 67 (QDNVKVSLAFGLSIATLAQ) threads the bilayer. The Cytoplasmic segment spans residues 68–70 (SVG). Residues 71–84 (HISGAHLNPAVTLG) lie within the membrane without spanning it. The short motif at 78–80 (NPA) is the NPA 1 element. Residues 85–92 (LLLSCQIS) lie on the Cytoplasmic side of the membrane. Residues 93-111 (ILRAVMYIIAQCVGAIVAT) form a helical membrane-spanning segment. Topologically, residues 112–135 (AILSGITSSLPDNSLGRNELAPGV) are extracellular. A helical membrane pass occupies residues 136–155 (NSGQGLGIEIIGTLQLVLCV). Topologically, residues 156-165 (LATTDRRRRD) are cytoplasmic. A helical membrane pass occupies residues 166-183 (LGGSGPLAIGLSVALGHL). Residues 184–188 (LAIDY) are Extracellular-facing. An intramembrane segment occupies 189 to 201 (TGCGINPARSFGS). The NPA 2 motif lies at 194–196 (NPA). Topologically, residues 202–208 (SVITHNF) are extracellular. A helical transmembrane segment spans residues 209 to 226 (KDHWIFWVGPFIGGALAV). Over 227–271 (LIYDFILAPRSSDLTDRVKVWTSGQVEEYELDGDDINSRVEMKPK) the chain is Cytoplasmic. Phosphoserine is present on S249. Y255 carries the phosphotyrosine modification. A Phosphoserine modification is found at S264.

The protein belongs to the MIP/aquaporin (TC 1.A.8) family. As to quaternary structure, homotetramer; each monomer provides an independent water pore. Component of the ankyrin-1 complex in the erythrocyte, composed of ANK1, RHCE, RHAG, SLC4A1, EPB42, GYPA, GYPB and AQP1. Interacts with EPHB2; involved in endolymph production in the inner ear. Identified in a complex with STOM. Interacts (via the N-terminal) with ANK1 (via ANK 1-5 repeats). Interacts (via the C-terminal) with EPB42.

The protein resides in the cell membrane. It catalyses the reaction H2O(in) = H2O(out). It carries out the reaction nitric oxide(out) = nitric oxide(in). The catalysed reaction is CO2(out) = CO2(in). The enzyme catalyses glycerol(in) = glycerol(out). It catalyses the reaction H2O2(out) = H2O2(in). It carries out the reaction K(+)(in) = K(+)(out). The catalysed reaction is Na(+)(in) = Na(+)(out). In terms of biological role, forms a water channel that facilitates the transport of water across cell membranes, playing a crucial role in water homeostasis in various tissues. Could also be permeable to small solutes including hydrogen peroxide, glycerol and gases such as amonnia (NH3), nitric oxide (NO) and carbon dioxide (CO2). Recruited to the ankyrin-1 complex, a multiprotein complex of the erythrocyte membrane, it could be part of a CO2 metabolon, linking facilitated diffusion of CO2 across the membrane, anion exchange of Cl(-)/HCO3(-) and interconversion of dissolved CO2 and carbonic acid in the cytosol. In vitro, it shows non-selective gated cation channel activity and may be permeable to cations like K(+) and Na(+) in vivo. The protein is Aquaporin-1 of Canis lupus familiaris (Dog).